A 135-amino-acid polypeptide reads, in one-letter code: Lactoylglutathione lyase (135 aa).

The VOC domain occupies 2-126 (QILHTMLRVG…DGYKIEFIEN (125 aa)). His-5 serves as a coordination point for Ni(2+). Arg-9 contacts substrate. Residue Glu-56 participates in Ni(2+) binding. The substrate site is built by Asn-60 and His-74. The Ni(2+) site is built by His-74 and Glu-122. Catalysis depends on Glu-122, which acts as the Proton donor/acceptor.

This sequence belongs to the glyoxalase I family. Homodimer. Requires Ni(2+) as cofactor.

The enzyme catalyses (R)-S-lactoylglutathione = methylglyoxal + glutathione. It participates in secondary metabolite metabolism; methylglyoxal degradation; (R)-lactate from methylglyoxal: step 1/2. Catalyzes the conversion of hemimercaptal, formed from methylglyoxal and glutathione, to S-lactoylglutathione. The chain is Lactoylglutathione lyase (gloA) from Haemophilus influenzae (strain ATCC 51907 / DSM 11121 / KW20 / Rd).